The chain runs to 257 residues: MVKIGILGSTGRVGSLLIDDLQNDKDAKLSAVHVTSKLLKTLPQDTIVTNDIKVLFDSCDVIIDFSKPSGTEALLTEVIENGAKKPLVIATTGLNKHQQNLLLEASKLVPILYATNMSLGVAVLNKLVTLASKTLRDFDIEIVEQHHRHKIDAPSGTALTLAEHAASARDLNLDDVRISGRDGNIGARTKDEIAVMALRGGDIVGRHTVGLYNDGEFLELNHTATARNTFSKGAIKVAKWIVGKDAKLYSINDALGL.

NAD(+) contacts are provided by residues 8–13 (GSTGRV), 90–92 (ATT), and 114–117 (ATNM). His146 functions as the Proton donor/acceptor in the catalytic mechanism. His147 serves as a coordination point for (S)-2,3,4,5-tetrahydrodipicolinate. The active-site Proton donor is Lys150. 156-157 (GT) provides a ligand contact to (S)-2,3,4,5-tetrahydrodipicolinate.

The protein belongs to the DapB family.

It localises to the cytoplasm. It catalyses the reaction (S)-2,3,4,5-tetrahydrodipicolinate + NAD(+) + H2O = (2S,4S)-4-hydroxy-2,3,4,5-tetrahydrodipicolinate + NADH + H(+). The catalysed reaction is (S)-2,3,4,5-tetrahydrodipicolinate + NADP(+) + H2O = (2S,4S)-4-hydroxy-2,3,4,5-tetrahydrodipicolinate + NADPH + H(+). It participates in amino-acid biosynthesis; L-lysine biosynthesis via DAP pathway; (S)-tetrahydrodipicolinate from L-aspartate: step 4/4. Catalyzes the conversion of 4-hydroxy-tetrahydrodipicolinate (HTPA) to tetrahydrodipicolinate. This Aliarcobacter butzleri (strain RM4018) (Arcobacter butzleri) protein is 4-hydroxy-tetrahydrodipicolinate reductase.